The chain runs to 702 residues: Putative GMC-type oxidoreductase R135 (702 aa).

The helical transmembrane segment at 55–75 (LTGDIVIIGAGAAGSLLAHYL) threads the bilayer. 58–88 (DIVIIGAGAAGSLLAHYLARFSNMKIILLEA) lines the FAD pocket. Residue histidine 628 is part of the active site.

The protein belongs to the GMC oxidoreductase family. FAD is required as a cofactor.

It is found in the virion. It localises to the host membrane. This chain is Putative GMC-type oxidoreductase R135, found in Acanthamoeba polyphaga (Amoeba).